The chain runs to 436 residues: Adenylosuccinate synthetase (436 aa).

Residues 13 to 19 (GDEGKGK) and 41 to 43 (GHT) each bind GTP. Aspartate 14 acts as the Proton acceptor in catalysis. 2 residues coordinate Mg(2+): aspartate 14 and glycine 41. Residues 14-17 (DEGK), 39-42 (NAGH), threonine 130, arginine 144, glutamine 225, threonine 240, and arginine 304 contribute to the IMP site. Histidine 42 serves as the catalytic Proton donor. 300 to 306 (ATTGRSR) lines the substrate pocket. Residues arginine 306, 332–334 (KLD), and 415–417 (STG) each bind GTP.

Belongs to the adenylosuccinate synthetase family. In terms of assembly, homodimer. Requires Mg(2+) as cofactor.

Its subcellular location is the cytoplasm. The enzyme catalyses IMP + L-aspartate + GTP = N(6)-(1,2-dicarboxyethyl)-AMP + GDP + phosphate + 2 H(+). It functions in the pathway purine metabolism; AMP biosynthesis via de novo pathway; AMP from IMP: step 1/2. In terms of biological role, plays an important role in the de novo pathway of purine nucleotide biosynthesis. Catalyzes the first committed step in the biosynthesis of AMP from IMP. In Hamiltonella defensa subsp. Acyrthosiphon pisum (strain 5AT), this protein is Adenylosuccinate synthetase.